The primary structure comprises 218 residues: Cytidylate kinase (218 aa).

11-19 (GPGASGKGT) is a binding site for ATP.

It belongs to the cytidylate kinase family. Type 1 subfamily.

The protein localises to the cytoplasm. The enzyme catalyses CMP + ATP = CDP + ADP. The catalysed reaction is dCMP + ATP = dCDP + ADP. The sequence is that of Cytidylate kinase from Neisseria meningitidis serogroup A / serotype 4A (strain DSM 15465 / Z2491).